The chain runs to 459 residues: tRNA modification GTPase MnmE (459 aa).

Positions 22, 85, and 124 each coordinate (6S)-5-formyl-5,6,7,8-tetrahydrofolate. The region spanning 221–380 (GLSTVIVGKP…LEIQIRDLFF (160 aa)) is the TrmE-type G domain. Position 231 (Asn-231) interacts with K(+). GTP-binding positions include 231 to 236 (NVGKSS), 250 to 256 (TEVAGTT), and 275 to 278 (DTAG). Position 235 (Ser-235) interacts with Mg(2+). The K(+) site is built by Thr-250, Val-252, and Thr-255. Thr-256 is a Mg(2+) binding site. Lys-459 serves as a coordination point for (6S)-5-formyl-5,6,7,8-tetrahydrofolate.

Belongs to the TRAFAC class TrmE-Era-EngA-EngB-Septin-like GTPase superfamily. TrmE GTPase family. In terms of assembly, homodimer. Heterotetramer of two MnmE and two MnmG subunits. The cofactor is K(+).

It localises to the cytoplasm. In terms of biological role, exhibits a very high intrinsic GTPase hydrolysis rate. Involved in the addition of a carboxymethylaminomethyl (cmnm) group at the wobble position (U34) of certain tRNAs, forming tRNA-cmnm(5)s(2)U34. The protein is tRNA modification GTPase MnmE of Staphylococcus aureus (strain bovine RF122 / ET3-1).